The sequence spans 152 residues: Large ribosomal subunit protein bL9 (152 aa).

Belongs to the bacterial ribosomal protein bL9 family.

Binds to the 23S rRNA. The chain is Large ribosomal subunit protein bL9 from Streptococcus thermophilus (strain ATCC BAA-491 / LMD-9).